The chain runs to 201 residues: Imidazoleglycerol-phosphate dehydratase (201 aa).

This sequence belongs to the imidazoleglycerol-phosphate dehydratase family.

The protein resides in the cytoplasm. The catalysed reaction is D-erythro-1-(imidazol-4-yl)glycerol 3-phosphate = 3-(imidazol-4-yl)-2-oxopropyl phosphate + H2O. The protein operates within amino-acid biosynthesis; L-histidine biosynthesis; L-histidine from 5-phospho-alpha-D-ribose 1-diphosphate: step 6/9. The polypeptide is Imidazoleglycerol-phosphate dehydratase (Methanopyrus kandleri (strain AV19 / DSM 6324 / JCM 9639 / NBRC 100938)).